The primary structure comprises 162 residues: Phosphopantetheine adenylyltransferase (162 aa).

S9 lines the substrate pocket. ATP is bound by residues 9 to 10 (SF) and H17. Residues K41, L77, and K91 each contribute to the substrate site. Residues 92-94 (GLR), E102, and 126-132 (YAFLSSS) contribute to the ATP site.

Belongs to the bacterial CoaD family. Homohexamer. It depends on Mg(2+) as a cofactor.

Its subcellular location is the cytoplasm. It carries out the reaction (R)-4'-phosphopantetheine + ATP + H(+) = 3'-dephospho-CoA + diphosphate. It participates in cofactor biosynthesis; coenzyme A biosynthesis; CoA from (R)-pantothenate: step 4/5. Reversibly transfers an adenylyl group from ATP to 4'-phosphopantetheine, yielding dephospho-CoA (dPCoA) and pyrophosphate. In Parafrankia sp. (strain EAN1pec), this protein is Phosphopantetheine adenylyltransferase.